The primary structure comprises 192 residues: Probable nicotinate-nucleotide adenylyltransferase (192 aa).

This sequence belongs to the NadD family.

It catalyses the reaction nicotinate beta-D-ribonucleotide + ATP + H(+) = deamido-NAD(+) + diphosphate. The protein operates within cofactor biosynthesis; NAD(+) biosynthesis; deamido-NAD(+) from nicotinate D-ribonucleotide: step 1/1. In terms of biological role, catalyzes the reversible adenylation of nicotinate mononucleotide (NaMN) to nicotinic acid adenine dinucleotide (NaAD). This is Probable nicotinate-nucleotide adenylyltransferase from Cereibacter sphaeroides (strain ATCC 17029 / ATH 2.4.9) (Rhodobacter sphaeroides).